Reading from the N-terminus, the 533-residue chain is Non-specific phospholipase C1 (533 aa).

The signal sequence occupies residues 1–22 (MAFRRVLTTVILFCYLLISSQS).

The protein belongs to the bacterial phospholipase C family. In terms of tissue distribution, expressed in roots, leaves, stems, flowers and siliques.

It localises to the secreted. This chain is Non-specific phospholipase C1 (NPC1), found in Arabidopsis thaliana (Mouse-ear cress).